Here is a 558-residue protein sequence, read N- to C-terminus: Zeta-carotene desaturase, chloroplastic/chromoplastic (558 aa).

Residues 1–27 constitute a chloroplast and chromoplast transit peptide; that stretch reads MASSVVFAATGSLSVPPLKSRRFYVNS.

The protein belongs to the zeta carotene desaturase family. Decylplastoquinone serves as cofactor. It depends on 6-decylubiquinone as a cofactor. In terms of tissue distribution, highly expressed in leaves. Expressed at low levels in flowers and siliques.

The protein localises to the plastid. Its subcellular location is the chloroplast. It localises to the chromoplast. It catalyses the reaction 9,9'-di-cis-zeta-carotene + 2 a quinone = 7,7',9,9'-tetra-cis-lycopene + 2 a quinol. It functions in the pathway carotenoid biosynthesis; lycopene biosynthesis. Functionally, plays a crucial role in plant growth and development. Is essential for the biosynthesis of carotenoids. Carotenoids are involved in different physiological processes, including coloration, photoprotection, biosynthesis of abscisic acid (ABA) and chloroplast biogenesis. Catalyzes the conversion of zeta-carotene to lycopene via the intermediary of neurosporene. It carries out two consecutive desaturations (introduction of double bonds) at positions C-7 and C-7'. Shows stereoselectivity toward trans C15-C15'zeta-carotene double bond. The zeta-carotene produced by the phytoene desaturase PDS has a C15-C15' double bond in the cis configuration and it requires isomerization before being recognized as substrate by ZDS. The main product is 7,9,7',9'-tetra-cis-lycopene (pro-lycopene). The chain is Zeta-carotene desaturase, chloroplastic/chromoplastic from Arabidopsis thaliana (Mouse-ear cress).